A 328-amino-acid polypeptide reads, in one-letter code: uncharacterized protein (328 aa).

A disordered region spans residues 296–328 (APEGDLEDEIIEVDPEQPRDDPYRRLRTPPPGG). Residues 299-310 (GDLEDEIIEVDP) show a composition bias toward acidic residues.

Possibly necessary for replication. This is an uncharacterized protein from Halobacterium sp. (strain GN101).